The primary structure comprises 473 residues: Cysteine--tRNA ligase (473 aa).

A Zn(2+)-binding site is contributed by C28. Residues M30 to H40 carry the 'HIGH' region motif. Residues C212, H237, and E241 each contribute to the Zn(2+) site. Residues K277–S281 carry the 'KMSKS' region motif. K280 contributes to the ATP binding site.

This sequence belongs to the class-I aminoacyl-tRNA synthetase family. In terms of assembly, monomer. The cofactor is Zn(2+).

The protein localises to the cytoplasm. The catalysed reaction is tRNA(Cys) + L-cysteine + ATP = L-cysteinyl-tRNA(Cys) + AMP + diphosphate. This Polynucleobacter asymbioticus (strain DSM 18221 / CIP 109841 / QLW-P1DMWA-1) (Polynucleobacter necessarius subsp. asymbioticus) protein is Cysteine--tRNA ligase.